We begin with the raw amino-acid sequence, 116 residues long: uncharacterized protein (116 aa).

Transmembrane regions (helical) follow at residues 40–60 (AIVK…IGIL) and 72–92 (FLGS…VVPI).

It localises to the membrane. This is an uncharacterized protein from Saccharomyces cerevisiae (strain ATCC 204508 / S288c) (Baker's yeast).